Here is a 110-residue protein sequence, read N- to C-terminus: Coiled-coil-helix-coiled-coil-helix domain-containing protein 5 (110 aa).

At Met1 the chain carries N-acetylmethionine. CHCH domains are found at residues 9-52 (ARYC…PIIR) and 55-97 (RQAC…QPPS). Short sequence motifs (cx9C motif) lie at residues 12 to 22 (CSRELDQYGQC), 34 to 44 (CHHLKMSIARC), 58 to 68 (CAEPFEAFEKC), and 79 to 89 (CAEHMRRFLQC). 4 disulfide bridges follow: Cys12–Cys44, Cys22–Cys34, Cys58–Cys89, and Cys68–Cys79.

As to quaternary structure, monomer.

The protein resides in the mitochondrion intermembrane space. This chain is Coiled-coil-helix-coiled-coil-helix domain-containing protein 5 (Chchd5), found in Mus musculus (Mouse).